The chain runs to 349 residues: Delta(7)-sterol 5(6)-desaturase ERG3A (349 aa).

Helical transmembrane passes span 84-104, 124-144, and 162-182; these read ITWI…YIFI, IIAA…FFLL, and LWYD…CIYW. In terms of domain architecture, Fatty acid hydroxylase spans 170–296; sequence PLFLLFTDFC…FTAFDRMGGT (127 aa). The short motif at 184–188 is the Histidine box-1 element; that stretch reads HRWLH. Residues 197 to 201 carry the Histidine box-2 motif; sequence HKLHH. A helical membrane pass occupies residues 227-247; the sequence is HIFPFIFPLQKMAYVALFVFV. The Histidine box-3 motif lies at 272-276; the sequence is HSLHH.

It belongs to the sterol desaturase family.

The protein localises to the endoplasmic reticulum membrane. It carries out the reaction episterol + 2 Fe(II)-[cytochrome b5] + O2 + 2 H(+) = 5-dehydroepisterol + 2 Fe(III)-[cytochrome b5] + 2 H2O. It participates in steroid metabolism; ergosterol biosynthesis. Functionally, C-5 sterol desaturase; part of the third module of ergosterol biosynthesis pathway that includes the late steps of the pathway. ERG3A and ERG3BB catalyze the introduction of a C-5 double bond in the B ring to produce 5-dehydroepisterol. The third module or late pathway involves the ergosterol synthesis itself through consecutive reactions that mainly occur in the endoplasmic reticulum (ER) membrane. Firstly, the squalene synthase ERG9 catalyzes the condensation of 2 farnesyl pyrophosphate moieties to form squalene, which is the precursor of all steroids. Squalene synthase is crucial for balancing the incorporation of farnesyl diphosphate (FPP) into sterol and nonsterol isoprene synthesis. Secondly, squalene is converted into lanosterol by the consecutive action of the squalene epoxidase ERG1 and the lanosterol synthase ERG7. Then, the delta(24)-sterol C-methyltransferase ERG6 methylates lanosterol at C-24 to produce eburicol. Eburicol is the substrate of the sterol 14-alpha demethylase encoded by CYP51A, CYP51B and CYP51C, to yield 4,4,24-trimethyl ergosta-8,14,24(28)-trienol. CYP51B encodes the enzyme primarily responsible for sterol 14-alpha-demethylation, and plays an essential role in ascospore formation. CYP51A encodes an additional sterol 14-alpha-demethylase, induced on ergosterol depletion and responsible for the intrinsic variation in azole sensitivity. The third CYP51 isoform, CYP51C, does not encode a sterol 14-alpha-demethylase, but is required for full virulence on host wheat ears. The C-14 reductase ERG24 then reduces the C14=C15 double bond which leads to 4,4-dimethylfecosterol. A sequence of further demethylations at C-4, involving the C-4 demethylation complex containing the C-4 methylsterol oxidases ERG25, the sterol-4-alpha-carboxylate 3-dehydrogenase ERG26 and the 3-keto-steroid reductase ERG27, leads to the production of fecosterol via 4-methylfecosterol. ERG28 has a role as a scaffold to help anchor ERG25, ERG26 and ERG27 to the endoplasmic reticulum. The C-8 sterol isomerase ERG2 then catalyzes the reaction which results in unsaturation at C-7 in the B ring of sterols and thus converts fecosterol to episterol. The sterol-C5-desaturases ERG3A and ERG3BB then catalyze the introduction of a C-5 double bond in the B ring to produce 5-dehydroepisterol. The C-22 sterol desaturases ERG5A and ERG5B further convert 5-dehydroepisterol into ergosta-5,7,22,24(28)-tetraen-3beta-ol by forming the C-22(23) double bond in the sterol side chain. Finally, ergosta-5,7,22,24(28)-tetraen-3beta-ol is substrate of the C-24(28) sterol reductase ERG4 to produce ergosterol. The polypeptide is Delta(7)-sterol 5(6)-desaturase ERG3A (Gibberella zeae (strain ATCC MYA-4620 / CBS 123657 / FGSC 9075 / NRRL 31084 / PH-1) (Wheat head blight fungus)).